The primary structure comprises 617 residues: UvrABC system protein C (617 aa).

The region spanning 22 to 100 (NLPGVYRFFN…IKALSPKYNI (79 aa)) is the GIY-YIG domain. The UVR domain maps to 209–244 (DELTRTLQHKMQTAAANLQFEEAARYRDQIQALGIM).

Belongs to the UvrC family. Interacts with UvrB in an incision complex.

Its subcellular location is the cytoplasm. In terms of biological role, the UvrABC repair system catalyzes the recognition and processing of DNA lesions. UvrC both incises the 5' and 3' sides of the lesion. The N-terminal half is responsible for the 3' incision and the C-terminal half is responsible for the 5' incision. This Neisseria meningitidis serogroup B (strain ATCC BAA-335 / MC58) protein is UvrABC system protein C.